A 216-amino-acid polypeptide reads, in one-letter code: NKG2-D type II integral membrane protein (216 aa).

The Cytoplasmic portion of the chain corresponds to 1 to 51; that stretch reads MGWIRGRRPRHNLEMSEFHNYKLGLAKSDFSTRCQKQRCPVIKSKCRENAS. The chain crosses the membrane as a helical; Signal-anchor for type II membrane protein span at residues 52 to 72; that stretch reads PLFFCCFIAVAMGIRFIIMVT. Over 73 to 216 the chain is Extracellular; the sequence is IWSAVFLNSL…NTYICMQRTV (144 aa). Disulfide bonds link Cys96-Cys105 and Cys99-Cys110. A C-type lectin domain is found at 98–213; that stretch reads PCPKNWICYK…SIPNTYICMQ (116 aa). N-linked (GlcNAc...) asparagine glycosylation is found at Asn115, Asn131, Asn163, and Asn202. 2 disulfides stabilise this stretch: Cys127–Cys211 and Cys189–Cys203.

In terms of assembly, homodimer; disulfide-linked. Heterohexamer composed of two subunits of KLRK1 and four subunits of HCST/DAP10. Interacts (via transmembrane domain) with HCST/DAP10 (via transmembrane domain); the interaction is required for KLRK1 NK cell surface and induces NK cell-mediated cytotoxicity. Can form disulfide-bonded heterodimer with CD94. Interacts with CEACAM1; recruits PTPN6 that dephosphorylates VAV1. In terms of tissue distribution, natural killer cells.

The protein resides in the cell membrane. Functionally, functions as an activating and costimulatory receptor involved in immunosurveillance upon binding to various cellular stress-inducible ligands displayed at the surface of autologous tumor cells and virus-infected cells. Provides both stimulatory and costimulatory innate immune responses on activated killer (NK) cells, leading to cytotoxic activity. Acts as a costimulatory receptor for T-cell receptor (TCR) in CD8(+) T-cell-mediated adaptive immune responses by amplifying T-cell activation. Stimulates perforin-mediated elimination of ligand-expressing tumor cells. Signaling involves calcium influx, culminating in the expression of TNF-alpha. Participates in NK cell-mediated bone marrow graft rejection. May play a regulatory role in differentiation and survival of NK cells. Binds to ligands belonging to various subfamilies of MHC class I-related glycoproteins. In Macaca fascicularis (Crab-eating macaque), this protein is NKG2-D type II integral membrane protein (KLRK1).